The chain runs to 419 residues: Tryptophan synthase beta chain (419 aa).

Lys113 is modified (N6-(pyridoxal phosphate)lysine).

Belongs to the TrpB family. Tetramer of two alpha and two beta chains. The cofactor is pyridoxal 5'-phosphate.

It catalyses the reaction (1S,2R)-1-C-(indol-3-yl)glycerol 3-phosphate + L-serine = D-glyceraldehyde 3-phosphate + L-tryptophan + H2O. It participates in amino-acid biosynthesis; L-tryptophan biosynthesis; L-tryptophan from chorismate: step 5/5. The beta subunit is responsible for the synthesis of L-tryptophan from indole and L-serine. This is Tryptophan synthase beta chain from Picrophilus torridus (strain ATCC 700027 / DSM 9790 / JCM 10055 / NBRC 100828 / KAW 2/3).